Reading from the N-terminus, the 308-residue chain is Pantothenate kinase (308 aa).

Residue 90–97 (GSVAVGKS) coordinates ATP.

Belongs to the prokaryotic pantothenate kinase family.

It localises to the cytoplasm. The enzyme catalyses (R)-pantothenate + ATP = (R)-4'-phosphopantothenate + ADP + H(+). The protein operates within cofactor biosynthesis; coenzyme A biosynthesis; CoA from (R)-pantothenate: step 1/5. This Sorangium cellulosum (strain So ce56) (Polyangium cellulosum (strain So ce56)) protein is Pantothenate kinase.